The primary structure comprises 93 residues: Beta-defensin 128 (93 aa).

The N-terminal stretch at 1-18 is a signal peptide; the sequence is MKLFLVLIILLFEVLTDG. Cystine bridges form between C24–C52, C32–C46, and C36–C53.

This sequence belongs to the beta-defensin family.

Its subcellular location is the secreted. Functionally, has antibacterial activity. This chain is Beta-defensin 128 (DEFB128), found in Pongo pygmaeus (Bornean orangutan).